A 185-amino-acid polypeptide reads, in one-letter code: Adenine phosphoribosyltransferase (185 aa).

Belongs to the purine/pyrimidine phosphoribosyltransferase family. Homodimer.

Its subcellular location is the cytoplasm. The enzyme catalyses AMP + diphosphate = 5-phospho-alpha-D-ribose 1-diphosphate + adenine. It functions in the pathway purine metabolism; AMP biosynthesis via salvage pathway; AMP from adenine: step 1/1. Functionally, catalyzes a salvage reaction resulting in the formation of AMP, that is energically less costly than de novo synthesis. This chain is Adenine phosphoribosyltransferase, found in Nocardioides sp. (strain ATCC BAA-499 / JS614).